The following is a 258-amino-acid chain: Synapse differentiation-inducing gene protein 1 (258 aa).

At methionine 1 to histidine 181 the chain is on the cytoplasmic side. At serine 137 the chain carries Phosphoserine. Residues leucine 182–tyrosine 202 traverse the membrane as a helical segment. The Extracellular portion of the chain corresponds to leucine 203–phenylalanine 228. The helical intramembrane region spans leucine 229–isoleucine 249. Topologically, residues alanine 250–leucine 258 are extracellular.

This sequence belongs to the CD225/Dispanin family. In terms of assembly, homodimer. Interacts with GRIA1 and GRIA2. As to expression, enriched in the cerebellum and also expressed in the neocortex and modestly in the hippocampus (at protein level). Expressed in hippocampal neurons, both in cell body and neurites, however its presence is enriched at excitatory synapses and also found in postsynaptic cells.

It is found in the cell membrane. The protein resides in the early endosome membrane. The protein localises to the postsynaptic density membrane. Its subcellular location is the synapse. It localises to the cell projection. It is found in the dendrite. The protein resides in the dendritic spine. Functionally, may regulate AMPA receptor content at nascent synapses, and have a role in postsynaptic development and maturation. This Rattus norvegicus (Rat) protein is Synapse differentiation-inducing gene protein 1 (Syndig1).